The chain runs to 132 residues: Fluoride-specific ion channel FluC (132 aa).

Transmembrane regions (helical) follow at residues 5-25 (LVAI…LGMW), 36-56 (GTLA…ALFA), 68-88 (FVVT…AEMF), and 103-123 (IAVH…TFGA). 2 residues coordinate Na(+): G75 and T78.

The protein belongs to the fluoride channel Fluc/FEX (TC 1.A.43) family.

The protein resides in the cell inner membrane. It catalyses the reaction fluoride(in) = fluoride(out). Its activity is regulated as follows. Na(+) is not transported, but it plays an essential structural role and its presence is essential for fluoride channel function. Its function is as follows. Fluoride-specific ion channel. Important for reducing fluoride concentration in the cell, thus reducing its toxicity. This chain is Fluoride-specific ion channel FluC, found in Chromohalobacter salexigens (strain ATCC BAA-138 / DSM 3043 / CIP 106854 / NCIMB 13768 / 1H11).